The sequence spans 95 residues: Aspartyl/glutamyl-tRNA(Asn/Gln) amidotransferase subunit C (95 aa).

Belongs to the GatC family. In terms of assembly, heterotrimer of A, B and C subunits.

It catalyses the reaction L-glutamyl-tRNA(Gln) + L-glutamine + ATP + H2O = L-glutaminyl-tRNA(Gln) + L-glutamate + ADP + phosphate + H(+). The enzyme catalyses L-aspartyl-tRNA(Asn) + L-glutamine + ATP + H2O = L-asparaginyl-tRNA(Asn) + L-glutamate + ADP + phosphate + 2 H(+). In terms of biological role, allows the formation of correctly charged Asn-tRNA(Asn) or Gln-tRNA(Gln) through the transamidation of misacylated Asp-tRNA(Asn) or Glu-tRNA(Gln) in organisms which lack either or both of asparaginyl-tRNA or glutaminyl-tRNA synthetases. The reaction takes place in the presence of glutamine and ATP through an activated phospho-Asp-tRNA(Asn) or phospho-Glu-tRNA(Gln). This Marinobacter nauticus (strain ATCC 700491 / DSM 11845 / VT8) (Marinobacter aquaeolei) protein is Aspartyl/glutamyl-tRNA(Asn/Gln) amidotransferase subunit C.